We begin with the raw amino-acid sequence, 252 residues long: Triosephosphate isomerase (252 aa).

10 to 12 contributes to the substrate binding site; sequence NWK. His-96 functions as the Electrophile in the catalytic mechanism. Catalysis depends on Glu-168, which acts as the Proton acceptor. Substrate is bound by residues Gly-174, Ser-214, and 235-236; that span reads GG.

It belongs to the triosephosphate isomerase family. In terms of assembly, homodimer.

It localises to the cytoplasm. The catalysed reaction is D-glyceraldehyde 3-phosphate = dihydroxyacetone phosphate. It functions in the pathway carbohydrate biosynthesis; gluconeogenesis. The protein operates within carbohydrate degradation; glycolysis; D-glyceraldehyde 3-phosphate from glycerone phosphate: step 1/1. Involved in the gluconeogenesis. Catalyzes stereospecifically the conversion of dihydroxyacetone phosphate (DHAP) to D-glyceraldehyde-3-phosphate (G3P). This chain is Triosephosphate isomerase, found in Lactobacillus acidophilus (strain ATCC 700396 / NCK56 / N2 / NCFM).